The sequence spans 452 residues: Pup--protein ligase (452 aa).

Glu9 is a binding site for Mg(2+). An ATP-binding site is contributed by Arg53. Position 55 (Tyr55) interacts with Mg(2+). Asp57 (proton acceptor) is an active-site residue. Glu63 lines the Mg(2+) pocket. 2 residues coordinate ATP: Thr66 and Trp419.

It belongs to the Pup ligase/Pup deamidase family. Pup-conjugating enzyme subfamily.

The catalysed reaction is ATP + [prokaryotic ubiquitin-like protein]-L-glutamate + [protein]-L-lysine = ADP + phosphate + N(6)-([prokaryotic ubiquitin-like protein]-gamma-L-glutamyl)-[protein]-L-lysine.. It participates in protein degradation; proteasomal Pup-dependent pathway. Its pathway is protein modification; protein pupylation. Its function is as follows. Catalyzes the covalent attachment of the prokaryotic ubiquitin-like protein modifier Pup to the proteasomal substrate proteins, thereby targeting them for proteasomal degradation. This tagging system is termed pupylation. The ligation reaction involves the side-chain carboxylate of the C-terminal glutamate of Pup and the side-chain amino group of a substrate lysine. The chain is Pup--protein ligase from Gordonia bronchialis (strain ATCC 25592 / DSM 43247 / BCRC 13721 / JCM 3198 / KCTC 3076 / NBRC 16047 / NCTC 10667) (Rhodococcus bronchialis).